Here is a 61-residue protein sequence, read N- to C-terminus: Short neurotoxin 2 (61 aa).

Disulfide bonds link C3–C23, C17–C40, C42–C53, and C54–C59.

The protein belongs to the three-finger toxin family. Short-chain subfamily. Type I alpha-neurotoxin sub-subfamily. As to expression, expressed by the venom gland.

The protein localises to the secreted. Binds to muscle nicotinic acetylcholine receptor (nAChR) and inhibit acetylcholine from binding to the receptor, thereby impairing neuromuscular transmission. This Naja nivea (Cape cobra) protein is Short neurotoxin 2.